The primary structure comprises 167 residues: ATP synthase subunit b (167 aa).

Residues 7–25 traverse the membrane as a helical segment; the sequence is SFWLTISFVIFVYLIYRPA.

This sequence belongs to the ATPase B chain family. F-type ATPases have 2 components, F(1) - the catalytic core - and F(0) - the membrane proton channel. F(1) has five subunits: alpha(3), beta(3), gamma(1), delta(1), epsilon(1). F(0) has three main subunits: a(1), b(2) and c(10-14). The alpha and beta chains form an alternating ring which encloses part of the gamma chain. F(1) is attached to F(0) by a central stalk formed by the gamma and epsilon chains, while a peripheral stalk is formed by the delta and b chains.

It is found in the cell inner membrane. F(1)F(0) ATP synthase produces ATP from ADP in the presence of a proton or sodium gradient. F-type ATPases consist of two structural domains, F(1) containing the extramembraneous catalytic core and F(0) containing the membrane proton channel, linked together by a central stalk and a peripheral stalk. During catalysis, ATP synthesis in the catalytic domain of F(1) is coupled via a rotary mechanism of the central stalk subunits to proton translocation. In terms of biological role, component of the F(0) channel, it forms part of the peripheral stalk, linking F(1) to F(0). The protein is ATP synthase subunit b of Rickettsia prowazekii (strain Madrid E).